An 80-amino-acid chain; its full sequence is Cell division topological specificity factor (80 aa).

The protein belongs to the MinE family.

Prevents the cell division inhibition by proteins MinC and MinD at internal division sites while permitting inhibition at polar sites. This ensures cell division at the proper site by restricting the formation of a division septum at the midpoint of the long axis of the cell. The protein is Cell division topological specificity factor of Wolinella succinogenes (strain ATCC 29543 / DSM 1740 / CCUG 13145 / JCM 31913 / LMG 7466 / NCTC 11488 / FDC 602W) (Vibrio succinogenes).